The sequence spans 433 residues: Putative purine permease YbbY (433 aa).

The Periplasmic portion of the chain corresponds to 1-17 (MFNFAVSRESLLSGFQW). A helical transmembrane segment spans residues 18–38 (FFFIFCNTVVVPPTLLSAFQL). Residues 39 to 42 (PQSS) lie on the Cytoplasmic side of the membrane. Residues 43–63 (LLTLTQYAFLATALACFAQAF) form a helical membrane-spanning segment. The Periplasmic portion of the chain corresponds to 64–68 (CGHRR). A helical transmembrane segment spans residues 69 to 89 (AIMEGPGGLWWGTILTITLGE). The Cytoplasmic portion of the chain corresponds to 90–102 (ASRGTPINDIATS). Residues 103-123 (LAVGIALSGVLTMLIGFSGLG) traverse the membrane as a helical segment. Residues 124–130 (HRLARLF) are Periplasmic-facing. The helical transmembrane segment at 131–151 (TPSVMVLFMLMLGAQLTTIFF) threads the bilayer. At 152-169 (KGMLGLPFGIADPNFKIQ) the chain is on the cytoplasmic side. The chain crosses the membrane as a helical span at residues 170-190 (LPPFALSVAVMCLVLAMIIFL). Over 191-196 (PQRFAR) the chain is Periplasmic. The helical transmembrane segment at 197-217 (YGLLVGTITGWLLWYFCFPSS) threads the bilayer. At 218 to 230 (HSLSGELHWQWFP) the chain is on the cytoplasmic side. Residues 231 to 251 (LGSGGALSPGIILTAVITGLV) traverse the membrane as a helical segment. Residues 252 to 288 (NISNTYGAIRGTDVFYPQQGAGNTRYRRSFVATGFMT) are Periplasmic-facing. Residues 289-309 (LITVPLAVIPFSPFVSSIGLL) traverse the membrane as a helical segment. The Cytoplasmic portion of the chain corresponds to 310 to 319 (TQTGDYTRRS). A helical membrane pass occupies residues 320–340 (FIYGSVICLLVALVPALTRLF). At 341-345 (CSIPL) the chain is on the periplasmic side. Residues 346 to 366 (PVSSAVMLVSYLPLLFSALVF) form a helical membrane-spanning segment. Over 367–379 (SQQITFTARNIYR) the chain is Cytoplasmic. The helical transmembrane segment at 380-400 (LALPLFVGIFLMALPPVYLQD) threads the bilayer. The Periplasmic segment spans residues 401 to 407 (LPLTLRP). A helical transmembrane segment spans residues 408–428 (LLSNGLLVGILLAVLMDNLIP). At 429–433 (WERIE) the chain is on the cytoplasmic side.

This sequence belongs to the nucleobase:cation symporter-2 (NCS2) (TC 2.A.40) family.

It localises to the cell inner membrane. The chain is Putative purine permease YbbY (ybbY) from Escherichia coli (strain K12).